Here is a 127-residue protein sequence, read N- to C-terminus: Large ribosomal subunit protein uL22 (127 aa).

This sequence belongs to the universal ribosomal protein uL22 family. As to quaternary structure, part of the 50S ribosomal subunit.

This protein binds specifically to 23S rRNA; its binding is stimulated by other ribosomal proteins, e.g. L4, L17, and L20. It is important during the early stages of 50S assembly. It makes multiple contacts with different domains of the 23S rRNA in the assembled 50S subunit and ribosome. In terms of biological role, the globular domain of the protein is located near the polypeptide exit tunnel on the outside of the subunit, while an extended beta-hairpin is found that lines the wall of the exit tunnel in the center of the 70S ribosome. In Rhizorhabdus wittichii (strain DSM 6014 / CCUG 31198 / JCM 15750 / NBRC 105917 / EY 4224 / RW1) (Sphingomonas wittichii), this protein is Large ribosomal subunit protein uL22.